Reading from the N-terminus, the 458-residue chain is ATP synthase subunit beta (458 aa).

148–155 is a binding site for ATP; sequence GGAGVGKT.

Belongs to the ATPase alpha/beta chains family. F-type ATPases have 2 components, CF(1) - the catalytic core - and CF(0) - the membrane proton channel. CF(1) has five subunits: alpha(3), beta(3), gamma(1), delta(1), epsilon(1). CF(0) has three main subunits: a(1), b(2) and c(9-12). The alpha and beta chains form an alternating ring which encloses part of the gamma chain. CF(1) is attached to CF(0) by a central stalk formed by the gamma and epsilon chains, while a peripheral stalk is formed by the delta and b chains.

It localises to the cell inner membrane. The catalysed reaction is ATP + H2O + 4 H(+)(in) = ADP + phosphate + 5 H(+)(out). In terms of biological role, produces ATP from ADP in the presence of a proton gradient across the membrane. The catalytic sites are hosted primarily by the beta subunits. This is ATP synthase subunit beta from Pseudomonas putida (strain W619).